Reading from the N-terminus, the 312-residue chain is Aspartate carbamoyltransferase catalytic subunit (312 aa).

The carbamoyl phosphate site is built by arginine 58 and threonine 59. Lysine 86 is a binding site for L-aspartate. Arginine 108, histidine 136, and glutamine 139 together coordinate carbamoyl phosphate. The L-aspartate site is built by arginine 169 and arginine 223. The carbamoyl phosphate site is built by glycine 264 and proline 265.

Belongs to the aspartate/ornithine carbamoyltransferase superfamily. ATCase family. As to quaternary structure, heterododecamer (2C3:3R2) of six catalytic PyrB chains organized as two trimers (C3), and six regulatory PyrI chains organized as three dimers (R2).

The catalysed reaction is carbamoyl phosphate + L-aspartate = N-carbamoyl-L-aspartate + phosphate + H(+). The protein operates within pyrimidine metabolism; UMP biosynthesis via de novo pathway; (S)-dihydroorotate from bicarbonate: step 2/3. Its function is as follows. Catalyzes the condensation of carbamoyl phosphate and aspartate to form carbamoyl aspartate and inorganic phosphate, the committed step in the de novo pyrimidine nucleotide biosynthesis pathway. The polypeptide is Aspartate carbamoyltransferase catalytic subunit (Desulfitobacterium hafniense (strain DSM 10664 / DCB-2)).